The following is a 155-amino-acid chain: Ribosome maturation factor RimP (155 aa).

Belongs to the RimP family.

Its subcellular location is the cytoplasm. Its function is as follows. Required for maturation of 30S ribosomal subunits. This is Ribosome maturation factor RimP from Prochlorococcus marinus (strain AS9601).